The sequence spans 298 residues: Protoheme IX farnesyltransferase (298 aa).

9 consecutive transmembrane segments (helical) span residues 16-36 (VVAL…PDMP), 45-65 (ALGF…NQLL), 93-113 (VFAG…VNVI), 114-134 (TAVL…VYLK), 141-161 (IVIG…AVTG), 172-192 (SLLV…LAIF), 223-243 (VLLA…VFYL), 244-264 (GGAI…LNPP), and 277-297 (IVYL…LPWV).

The protein belongs to the UbiA prenyltransferase family. Protoheme IX farnesyltransferase subfamily.

It is found in the cell inner membrane. The catalysed reaction is heme b + (2E,6E)-farnesyl diphosphate + H2O = Fe(II)-heme o + diphosphate. It functions in the pathway porphyrin-containing compound metabolism; heme O biosynthesis; heme O from protoheme: step 1/1. Converts heme B (protoheme IX) to heme O by substitution of the vinyl group on carbon 2 of heme B porphyrin ring with a hydroxyethyl farnesyl side group. The polypeptide is Protoheme IX farnesyltransferase (Xanthomonas euvesicatoria pv. vesicatoria (strain 85-10) (Xanthomonas campestris pv. vesicatoria)).